The chain runs to 231 residues: Protein crossbronx homolog (231 aa).

The 155-residue stretch at 14-168 (LQEYKILTEY…VEECVRLSQA (155 aa)) folds into the UBC core domain.

Belongs to the ubiquitin-conjugating enzyme family. FTS subfamily.

This chain is Protein crossbronx homolog, found in Culex quinquefasciatus (Southern house mosquito).